The primary structure comprises 1528 residues: Zinc finger FYVE domain-containing protein 16 (1528 aa).

S120 is modified (phosphoserine). The interval 629-664 (TQAVGGARPKQLLSLPPGTRSSKELNKPDVVDVPES) is disordered. Basic and acidic residues predominate over residues 649–658 (SSKELNKPDV). An FYVE-type zinc finger spans residues 735–793 (DSEAPNCMNCQVKFTFTKRRHHCRACGKVFCGVCCNRKCKLQYLEKEARVCVICYETIN). Zn(2+)-binding residues include C741, C744, C757, C760, C765, C768, C785, and C788. S803, S833, S884, and S927 each carry phosphoserine. The disordered stretch occupies residues 819-849 (TDQPLQETQTSSTPSPTTLPISALKQPNVEG). Residues 821 to 838 (QPLQETQTSSTPSPTTLP) show a composition bias toward low complexity. The segment at 928–949 (PTCHTAPVERLPGNTGTEGLPM) is disordered.

In terms of assembly, interacts (via C-terminus) with TOM1 (via C-terminus); interaction is required to target TOM1 to endosomes. Does not interact with TOM1L1 or TOM1L2.

Its subcellular location is the cytoplasm. It is found in the early endosome membrane. Functionally, may be involved in regulating membrane trafficking in the endosomal pathway. Overexpression induces endosome aggregation. Required to target TOM1 to endosomes. The sequence is that of Zinc finger FYVE domain-containing protein 16 (Zfyve16) from Mus musculus (Mouse).